The primary structure comprises 94 residues: Large ribosomal subunit protein bL25 (94 aa).

It belongs to the bacterial ribosomal protein bL25 family. Part of the 50S ribosomal subunit; part of the 5S rRNA/L5/L18/L25 subcomplex. Contacts the 5S rRNA. Binds to the 5S rRNA independently of L5 and L18.

Functionally, this is one of the proteins that binds to the 5S RNA in the ribosome where it forms part of the central protuberance. In Pectobacterium atrosepticum (strain SCRI 1043 / ATCC BAA-672) (Erwinia carotovora subsp. atroseptica), this protein is Large ribosomal subunit protein bL25.